We begin with the raw amino-acid sequence, 486 residues long: MSSVKLWPTGASAVPLVSREELKKLEFVGKGGFGVVFRAHHRTWNHDVAVKIVNSKKISWEVKAMVNLRNENVLLLLGVTEDLQWDFVSGQALVTRFMENGSLAGLLQPECPRPWPLLCRLLQEVVLGMCYLHSLNPPLLHRDLKPSNILLDPELHAKLADFGLSTFQGGSQSGSGSGSGSRDSGGTLAYLDPELLFDVNLKASKASDVYSFGILVWAVLAGREAELVDKTSLIRETVCDRQSRPPLTELPPGSPETPGLEKLKELMIHCWGSQSENRPSFQDCEPKTNEVYNLVKDKVDAAVSEVKHYLSQHRSSGRNLSAREPSQRGTEMDCPRETMVSKMLDRLHLEEPSGPVPGKCPERQAQDTSVGPATPARTSSDPVAGTPQIPHTLPFRGTTPGPVFTETPGPHPQRNQGDGRHGTPWYPWTPPNPMTGPPALVFNNCSEVQIGNYNSLVAPPRTTASSSAKYDQAQFGRGRGWQPFHK.

Ser-2 carries the phosphoserine modification. In terms of domain architecture, Protein kinase spans 22 to 292 (LKKLEFVGKG…DCEPKTNEVY (271 aa)). Residues 28 to 36 (VGKGGFGVV) and Lys-51 each bind ATP. The Proton acceptor role is filled by Asp-143. Residue Ser-165 is modified to Phosphoserine. The residue at position 187 (Thr-187) is a Phosphothreonine. Position 204 is a phosphoserine; by autocatalysis (Ser-204). Thr-231 carries the post-translational modification Phosphothreonine; by autocatalysis. The residue at position 232 (Ser-232) is a Phosphoserine; by autocatalysis. The residue at position 257 (Thr-257) is a Phosphothreonine. Residues Ser-304 and Ser-326 each carry the phosphoserine modification. Positions 312–333 (QHRSSGRNLSAREPSQRGTEMD) are disordered. Thr-338 is subject to Phosphothreonine. Residues 349-388 (LEEPSGPVPGKCPERQAQDTSVGPATPARTSSDPVAGTPQ) are disordered. Ser-353, Ser-369, and Ser-380 each carry phosphoserine. Residues 366 to 381 (QDTSVGPATPARTSSD) show a composition bias toward polar residues. Thr-392 is modified (phosphothreonine). The RIP homotypic interaction motif (RHIM) signature appears at 440-461 (LVFNNCSEVQIGNYNSLVAPPR). A disordered region spans residues 462–486 (TTASSSAKYDQAQFGRGRGWQPFHK). An Omega-N-methylarginine modification is found at Arg-477.

The protein belongs to the protein kinase superfamily. TKL Ser/Thr protein kinase family. Interacts (via RIP homotypic interaction motif) with RIPK1 (via RIP homotypic interaction motif); this interaction induces RIPK1 phosphorylation and formation of a RIPK1-RIPK3 necrosis-inducing complex. Interacts with MLKL; the interaction is direct and triggers necroptosis. Interacts with ZBP1 (via RIP homotypic interaction motif); interaction with ZBP1 activates RIPK3, triggering necroptosis. Upon TNF-induced necrosis, the RIPK1-RIPK3 dimer further interacts with PGAM5 and MLKL; the formation of this complex leads to PGAM5 phosphorylation and increase in PGAM5 phosphatase activity. Binds TRAF2 and is recruited to the TNFR-1 signaling complex. Interacts with PYGL, GLUL and GLUD1; these interactions result in activation of these metabolic enzymes. Interacts with BIRC2/c-IAP1, BIRC3/c-IAP2 and XIAP/BIRC4. Interacts with ARHGEF2. Interacts with PELI1 (via atypical FHA domain); the phosphorylated form at Thr-187 binds preferentially to PELI1. Interacts with BUB1B, TRAF2 and STUB1. Interacts with CASP6. Component of the AIM2 PANoptosome complex, a multiprotein complex that drives inflammatory cell death (PANoptosis). In terms of assembly, (Microbial infection) Interacts (via RIP homotypic interaction motif) with murid herpesvirus protein RIR1; this interaction disrupts RIP3-RIP1 interactions characteristic of TNF-alpha induced necroptosis, thereby suppressing this death pathway. Post-translationally, RIPK1 and RIPK3 undergo reciprocal auto- and trans-phosphorylation. Autophosphorylated following interaction with ZBP1. Phosphorylation of Ser-204 plays a role in the necroptotic function of RIPK3. Autophosphorylates at Thr-231 and Ser-232 following activation by ZBP1: phosphorylation at these sites is a hallmark of necroptosis and is required for binding MLKL. Phosphorylation at Thr-187 is important for its kinase activity, interaction with PELI1 and for its ability to mediate TNF-induced necroptosis. Polyubiquitinated with 'Lys-48' and 'Lys-63'-linked chains by BIRC2/c-IAP1 and BIRC3/c-IAP2, leading to activation of NF-kappa-B. Ubiquitinated by STUB1 leading to its subsequent proteasome-dependent degradation. In terms of tissue distribution, expressed in embryo and in adult spleen, liver, testis, heart, brain and lung.

The protein localises to the cytoplasm. It localises to the cytosol. It is found in the nucleus. It carries out the reaction L-seryl-[protein] + ATP = O-phospho-L-seryl-[protein] + ADP + H(+). The enzyme catalyses L-threonyl-[protein] + ATP = O-phospho-L-threonyl-[protein] + ADP + H(+). Its activity is regulated as follows. Activity is stimulated by ZBP1, which senses double-stranded Z-RNA structures. RIPK3-dependent necroptosis is inhibited by RIPK1: RIPK1 prevents the ZBP1-induced activation of RIPK3 via FADD-mediated recruitment of CASP8, which cleaves RIPK1 and limits TNF-induced necroptosis. Inhibited by type II inhibitor 1-(4-fluorophenyl)-N-[3-fluoro-4-(1H-pyrrolo[2,3-b]pyridin-4-yloxy)phenyl]-2-oxo-1,2-dihydropyridine-3-carboxamide. Functionally, serine/threonine-protein kinase that activates necroptosis and apoptosis, two parallel forms of cell death. Necroptosis, a programmed cell death process in response to death-inducing TNF-alpha family members, is triggered by RIPK3 following activation by ZBP1. Activated RIPK3 forms a necrosis-inducing complex and mediates phosphorylation of MLKL, promoting MLKL localization to the plasma membrane and execution of programmed necrosis characterized by calcium influx and plasma membrane damage. In addition to TNF-induced necroptosis, necroptosis can also take place in the nucleus in response to orthomyxoviruses infection: following ZBP1 activation, which senses double-stranded Z-RNA structures, nuclear RIPK3 catalyzes phosphorylation and activation of MLKL, promoting disruption of the nuclear envelope and leakage of cellular DNA into the cytosol. Also regulates apoptosis: apoptosis depends on RIPK1, FADD and CASP8, and is independent of MLKL and RIPK3 kinase activity. Phosphorylates RIPK1: RIPK1 and RIPK3 undergo reciprocal auto- and trans-phosphorylation. In some cell types, also able to restrict viral replication by promoting cell death-independent responses. In response to flavivirus infection in neurons, promotes a cell death-independent pathway that restricts viral replication: together with ZBP1, promotes a death-independent transcriptional program that modifies the cellular metabolism via up-regulation expression of the enzyme ACOD1/IRG1 and production of the metabolite itaconate. Itaconate inhibits the activity of succinate dehydrogenase, generating a metabolic state in neurons that suppresses replication of viral genomes. RIPK3 binds to and enhances the activity of three metabolic enzymes: GLUL, GLUD1, and PYGL. These metabolic enzymes may eventually stimulate the tricarboxylic acid cycle and oxidative phosphorylation, which could result in enhanced ROS production. The protein is Receptor-interacting serine/threonine-protein kinase 3 of Mus musculus (Mouse).